Here is a 248-residue protein sequence, read N- to C-terminus: tRNA (guanine-N(1)-)-methyltransferase (248 aa).

S-adenosyl-L-methionine contacts are provided by residues Gly-117 and 137 to 142 (IGDFVL).

This sequence belongs to the RNA methyltransferase TrmD family. Homodimer.

The protein localises to the cytoplasm. The catalysed reaction is guanosine(37) in tRNA + S-adenosyl-L-methionine = N(1)-methylguanosine(37) in tRNA + S-adenosyl-L-homocysteine + H(+). Its function is as follows. Specifically methylates guanosine-37 in various tRNAs. This is tRNA (guanine-N(1)-)-methyltransferase from Polynucleobacter necessarius subsp. necessarius (strain STIR1).